A 288-amino-acid chain; its full sequence is Protoheme IX farnesyltransferase 2 (288 aa).

Transmembrane regions (helical) follow at residues 16–36 (IGVF…GAVP), 38–58 (FAPV…AGAF), 88–108 (LWPL…AFAA), 111–131 (WAAL…TVWL), 139–159 (IVIG…VAVP), 166–186 (LILA…LATA), 227–247 (AFFG…GWFL), and 266–286 (FFAS…EPLL).

This sequence belongs to the UbiA prenyltransferase family. Protoheme IX farnesyltransferase subfamily.

It localises to the cell inner membrane. It catalyses the reaction heme b + (2E,6E)-farnesyl diphosphate + H2O = Fe(II)-heme o + diphosphate. Its pathway is porphyrin-containing compound metabolism; heme O biosynthesis; heme O from protoheme: step 1/1. Functionally, converts heme B (protoheme IX) to heme O by substitution of the vinyl group on carbon 2 of heme B porphyrin ring with a hydroxyethyl farnesyl side group. The polypeptide is Protoheme IX farnesyltransferase 2 (Paramagnetospirillum magneticum (strain ATCC 700264 / AMB-1) (Magnetospirillum magneticum)).